Consider the following 327-residue polypeptide: GTPase Obg (327 aa).

In terms of domain architecture, Obg spans 3–160 (NKFTDFIKIY…FIFVLELKIL (158 aa)). Residues 161 to 327 (ADVGLIGLPN…LIYYICNILS (167 aa)) enclose the OBG-type G domain. Residues 167–174 (GLPNSGKS), 192–196 (FTTLN), 214–217 (DIPG), 281–284 (SKSD), and 308–310 (SSF) each bind GTP. Residues Ser174 and Thr194 each coordinate Mg(2+).

The protein belongs to the TRAFAC class OBG-HflX-like GTPase superfamily. OBG GTPase family. In terms of assembly, monomer. Requires Mg(2+) as cofactor.

The protein resides in the cytoplasm. In terms of biological role, an essential GTPase which binds GTP, GDP and possibly (p)ppGpp with moderate affinity, with high nucleotide exchange rates and a fairly low GTP hydrolysis rate. Plays a role in control of the cell cycle, stress response, ribosome biogenesis and in those bacteria that undergo differentiation, in morphogenesis control. This chain is GTPase Obg, found in Karelsulcia muelleri (strain GWSS) (Sulcia muelleri).